The chain runs to 308 residues: Ribosomal RNA large subunit methyltransferase F (308 aa).

This sequence belongs to the methyltransferase superfamily. METTL16/RlmF family.

The protein localises to the cytoplasm. The catalysed reaction is adenosine(1618) in 23S rRNA + S-adenosyl-L-methionine = N(6)-methyladenosine(1618) in 23S rRNA + S-adenosyl-L-homocysteine + H(+). Specifically methylates the adenine in position 1618 of 23S rRNA. The polypeptide is Ribosomal RNA large subunit methyltransferase F (Salmonella arizonae (strain ATCC BAA-731 / CDC346-86 / RSK2980)).